The chain runs to 257 residues: MIRQEKMRVVSQKQIATNIFELTLHGELVQDMTPGQFVHVKVSDSLEPLLRRPISIANIDKDNNEFTMIYRAEGRGTKVLATNREGQQVNVLGPIGNGFPVDAVKEGGTALLVGGGIGVPPLHELSKQLNARGVKTIHVLGFQTEDVCFYEEEFSALGETHYVTVDGSKGTKGFVTNVLESRAPEFDVFYSCGPLPMLKALEGFYPEKEGYLSFEERMGCGIGACFACVCKTTDQIAKDYVKVCSDGPVFPKGTVAL.

The FAD-binding FR-type domain maps to 2–101 (IRQEKMRVVS…LGPIGNGFPV (100 aa)). Residues 52 to 55 (RPIS), 69 to 71 (IYR), and 76 to 77 (GT) each bind FAD. 4 residues coordinate [2Fe-2S] cluster: cysteine 220, cysteine 225, cysteine 228, and cysteine 244.

It belongs to the PyrK family. As to quaternary structure, heterotetramer of 2 PyrK and 2 PyrD type B subunits. [2Fe-2S] cluster is required as a cofactor. It depends on FAD as a cofactor.

It functions in the pathway pyrimidine metabolism; UMP biosynthesis via de novo pathway; orotate from (S)-dihydroorotate (NAD(+) route): step 1/1. Its function is as follows. Responsible for channeling the electrons from the oxidation of dihydroorotate from the FMN redox center in the PyrD type B subunit to the ultimate electron acceptor NAD(+). The polypeptide is Dihydroorotate dehydrogenase B (NAD(+)), electron transfer subunit (Lysinibacillus sphaericus (strain C3-41)).